A 122-amino-acid polypeptide reads, in one-letter code: Conotoxin flf14c (122 aa).

The first 22 residues, 1 to 22 (MGFRVLVLIVMVTTSALPFTFS), serve as a signal peptide directing secretion. A propeptide spanning residues 23 to 96 (EESGRSPFRP…AESPVGQKRW (74 aa)) is cleaved from the precursor. The interval 53 to 89 (RADGQTPDMHQPEMRRPEMRRPEVRRPEVRQPEFAES) is disordered. Over residues 62–85 (HQPEMRRPEMRRPEVRRPEVRQPE) the composition is skewed to basic and acidic residues. Cystine bridges form between C101–C121 and C105–C117.

In terms of tissue distribution, expressed by the venom duct.

The protein localises to the secreted. The protein is Conotoxin flf14c of Conus anabathrum floridanus (Florida cone).